The following is a 282-amino-acid chain: 2-dehydro-3-deoxyphosphooctonate aldolase (282 aa).

The protein belongs to the KdsA family.

It is found in the cytoplasm. The catalysed reaction is D-arabinose 5-phosphate + phosphoenolpyruvate + H2O = 3-deoxy-alpha-D-manno-2-octulosonate-8-phosphate + phosphate. The protein operates within carbohydrate biosynthesis; 3-deoxy-D-manno-octulosonate biosynthesis; 3-deoxy-D-manno-octulosonate from D-ribulose 5-phosphate: step 2/3. Its pathway is bacterial outer membrane biogenesis; lipopolysaccharide biosynthesis. In Shewanella sp. (strain W3-18-1), this protein is 2-dehydro-3-deoxyphosphooctonate aldolase.